The following is a 278-amino-acid chain: 3-methyl-2-oxobutanoate hydroxymethyltransferase (278 aa).

Residues aspartate 43 and aspartate 82 each contribute to the Mg(2+) site. Residues 43–44 (DS), aspartate 82, and lysine 112 contribute to the 3-methyl-2-oxobutanoate site. Residue glutamate 114 participates in Mg(2+) binding. Glutamate 181 (proton acceptor) is an active-site residue.

It belongs to the PanB family. Homodecamer; pentamer of dimers. The cofactor is Mg(2+).

The protein resides in the cytoplasm. The enzyme catalyses 3-methyl-2-oxobutanoate + (6R)-5,10-methylene-5,6,7,8-tetrahydrofolate + H2O = 2-dehydropantoate + (6S)-5,6,7,8-tetrahydrofolate. The protein operates within cofactor biosynthesis; (R)-pantothenate biosynthesis; (R)-pantoate from 3-methyl-2-oxobutanoate: step 1/2. Functionally, catalyzes the reversible reaction in which hydroxymethyl group from 5,10-methylenetetrahydrofolate is transferred onto alpha-ketoisovalerate to form ketopantoate. The polypeptide is 3-methyl-2-oxobutanoate hydroxymethyltransferase (Desulfitobacterium hafniense (strain Y51)).